The chain runs to 217 residues: Putative threonylcarbamoyl-AMP synthase (217 aa).

Positions 14–199 (SRGIVSAVGA…TPRVLRPGPV (186 aa)) constitute a YrdC-like domain.

It belongs to the SUA5 family.

Its subcellular location is the cytoplasm. It carries out the reaction L-threonine + hydrogencarbonate + ATP = L-threonylcarbamoyladenylate + diphosphate + H2O. Its function is as follows. Required for the formation of a threonylcarbamoyl group on adenosine at position 37 (t(6)A37) in tRNAs that read codons beginning with adenine. Catalyzes the conversion of L-threonine, HCO(3)(-)/CO(2) and ATP to give threonylcarbamoyl-AMP (TC-AMP) as the acyladenylate intermediate, with the release of diphosphate. This is Putative threonylcarbamoyl-AMP synthase from Mycobacterium tuberculosis (strain CDC 1551 / Oshkosh).